Consider the following 247-residue polypeptide: Carboxy-S-adenosyl-L-methionine synthase (247 aa).

S-adenosyl-L-methionine-binding positions include tyrosine 39, 64–66 (GCS), 89–90 (DN), 117–118 (DI), asparagine 132, and arginine 199.

The protein belongs to the class I-like SAM-binding methyltransferase superfamily. Cx-SAM synthase family. In terms of assembly, homodimer.

The catalysed reaction is prephenate + S-adenosyl-L-methionine = carboxy-S-adenosyl-L-methionine + 3-phenylpyruvate + H2O. Its function is as follows. Catalyzes the conversion of S-adenosyl-L-methionine (SAM) to carboxy-S-adenosyl-L-methionine (Cx-SAM). This Salmonella paratyphi B (strain ATCC BAA-1250 / SPB7) protein is Carboxy-S-adenosyl-L-methionine synthase.